Reading from the N-terminus, the 437-residue chain is Transcription factor AP-2-alpha (437 aa).

Lys-10 participates in a covalent cross-link: Glycyl lysine isopeptide (Lys-Gly) (interchain with G-Cter in SUMO); alternate. A Glycyl lysine isopeptide (Lys-Gly) (interchain with G-Cter in SUMO2); alternate cross-link involves residue Lys-10. Positions 14–107 are disordered; that stretch reads CEDRHDGTSN…GQRQSQESGL (94 aa). Positions 57–62 match the PPxY motif motif; sequence YFPPPY. 2 stretches are compositionally biased toward low complexity: residues 65-74 and 88-101; these read IYPQSQDPYS and QPQP…GQRQ. Residues Lys-177 and Lys-184 each participate in a glycyl lysine isopeptide (Lys-Gly) (interchain with G-Cter in SUMO2) cross-link. Phosphoserine; by PKA is present on Ser-239. Positions 280 to 410 are H-S-H (helix-span-helix), dimerization; the sequence is RRKAANVTLL…YLTEALKAMD (131 aa). Polar residues predominate over residues 414–427; the sequence is LSNNPNSHTDNSAK. Residues 414 to 437 form a disordered region; it reads LSNNPNSHTDNSAKSSDKEEKHRK. The span at 428–437 shows a compositional bias: basic and acidic residues; it reads SSDKEEKHRK.

The protein belongs to the AP-2 family. In terms of assembly, binds DNA as a dimer. Can form homodimers or heterodimers with other AP-2 family members. Interacts with WWOX. Interacts with UBE2I. Interacts with RALBP1 in a complex also containing EPN1 and NUMB during interphase and mitosis. Interacts with CITED4. Interacts with KCTD1; this interaction represses transcription activation. Interacts (via C-terminus) with CITED2 (via C-terminus); the interaction stimulates TFAP2A-transcriptional activation. Interacts (via N-terminus) with EP300 (via N-terminus); the interaction requires CITED2. Interacts with KCTD15; this interaction inhibits TFAP2A transcriptional activation. Post-translationally, sumoylated on Lys-10; which inhibits transcriptional activity.

The protein localises to the nucleus. Sequence-specific DNA-binding protein that interacts with inducible viral and cellular enhancer elements to regulate transcription of selected genes. AP-2 factors bind to the consensus sequence 5'-GCCNNNGGC-3' and activate genes involved in a large spectrum of important biological functions including proper eye, face, body wall, limb and neural tube development. They also suppress a number of genes including MCAM/MUC18, C/EBP alpha and MYC. AP-2-alpha is the only AP-2 protein required for early morphogenesis of the lens vesicle. Together with the CITED2 coactivator, stimulates the PITX2 P1 promoter transcription activation. Associates with chromatin to the PITX2 P1 promoter region. In Mus musculus (Mouse), this protein is Transcription factor AP-2-alpha (Tfap2a).